The sequence spans 185 residues: Ribosome-recycling factor (185 aa).

It belongs to the RRF family.

The protein localises to the cytoplasm. Functionally, responsible for the release of ribosomes from messenger RNA at the termination of protein biosynthesis. May increase the efficiency of translation by recycling ribosomes from one round of translation to another. The protein is Ribosome-recycling factor of Clostridium perfringens (strain ATCC 13124 / DSM 756 / JCM 1290 / NCIMB 6125 / NCTC 8237 / Type A).